The chain runs to 481 residues: MSAEYTCRSTNPWADSSTIYAGLVVNAVLDLDILHEKQKELISLWPILGGTVVQSTKPWSFTCGSNVDFESRTLDETVSTHFPNNWGNMTGPSASTTLDPAIVDAKFLFAIKPAPSTIFRIRVTVLRDATLVCFGITHQVTGAGGCFEVVSAFCDLLANRAIPHFALPPDARGLKLSDHITGGDDNVTSDELGDFEPPEKNWNIGVVKAATMMWRVLIAQFWKTLGLREKLTEKYIHLPGDWVDEVRNQAQKELSSLPESSDVELTRNDIISAWYLKTIHGPSSSSGCDTTPVDFYVAINYKGLLNPNTTGGCSEKGPSAEQQQTQYLHHSVAIFRCMFSAYQLQNDSISSIAWRIRRATLHYKQPSSIKKYVRFVEKNNSNLLVVDIRASNPFSMVGLSSWTTYNYMALDFSGAIGDRKAPQDGVRVTFVNPLALSPISGLTLYTLKDGKGGYVIRTANTKTQWKQLEKSSSMENLFPVL.

Active-site proton acceptor residues include histidine 164 and aspartate 411.

Belongs to the plant acyltransferase family. In terms of assembly, monomer.

Its function is as follows. Acetyltransferase; part of the gene cluster that mediates the biosynthesis of penifulvin A, a potent insecticidal sesquiterpene that features a [5.5.5.6]dioxafenestrane ring. The first step of the pathway is performed by the sesquiterpene cyclase peniA that generates the angular triquinane scaffold silphinene via cyclization of the linear farnesyl pyrophosphate (FPP). The cytochrome P450 monooxygenase peniB and the flavin-dependent monooxygenase peniC then catalyze a series of oxidation reactions to transform silphinene into penifulvin A. The dioxygenases peniD and peniF, as well as the acetyltransferase peniE, do not seem to be involved in the biosynthesis of penifulvin A. The polypeptide is Acetyltransferase peniE (Penicillium patulum (Penicillium griseofulvum)).